The sequence spans 459 residues: 5-hydroxytryptamine receptor 2C (459 aa).

The signal sequence occupies residues 1–32 (MVNLGTAVRSLLVHLIGLLVWQFDISISPVAA). Topologically, residues 33 to 56 (IVTDTFNSSDGGRLFQFPDGVQNW) are extracellular. A helical membrane pass occupies residues 57–81 (PALSIVVIIIMTIGGNILVIMAVSM). At 82–87 (EKKLHN) the chain is on the cytoplasmic side. The helical transmembrane segment at 88–112 (ATNYFLMSLAIADMLVGLLVMPLSL) threads the bilayer. The Extracellular portion of the chain corresponds to 113–129 (LAILYDYVWPLPRYLCP). Cys128 and Cys208 form a disulfide bridge. Residues 130–152 (VWISLDVLFSTASIMHLCAISLD) traverse the membrane as a helical segment. Thr140 contributes to the ergotamine binding site. A DRY motif; important for ligand-induced conformation changes motif is present at residues 152–154 (DRY). Over 153–168 (RYVAIRNPIEHSRFNS) the chain is Cytoplasmic. A helical membrane pass occupies residues 169–190 (RTKAIMKIAIVWAISIGVSVPI). Topologically, residues 191-214 (PVIGLRDESKVFVNNTTCVLNDPN) are extracellular. N-linked (GlcNAc...) asparagine glycosylation is found at Asn204 and Asn205. Leu210 provides a ligand contact to ergotamine. Residues 215-237 (FVLIGSFVAFFIPLTIMVITYFL) form a helical membrane-spanning segment. Residues 238 to 312 (TIYVLRRQTL…AINNEKKASK (75 aa)) are Cytoplasmic-facing. Residues 274–302 (DEEENAPNPNPDQKPRRKKKEKRPRGTMQ) are disordered. Residues 288-298 (PRRKKKEKRPR) show a composition bias toward basic residues. Residues 313–337 (VLGIVFFVFLIMWCPFFITNILSVL) traverse the membrane as a helical segment. Cys338 and Cys342 are oxidised to a cystine. The Extracellular portion of the chain corresponds to 338-348 (CGKACNQKLME). A helical membrane pass occupies residues 349–371 (KLLNVFVWIGYVCSGINPLVYTL). The NPxxY motif; important for ligand-induced conformation changes and signaling motif lies at 365–369 (NPLVY). At 372-459 (FNKIYRRAFS…NVVSERISSV (88 aa)) the chain is on the cytoplasmic side. Residues 457–459 (SSV) carry the PDZ-binding motif.

The protein belongs to the G-protein coupled receptor 1 family. In terms of assembly, interacts with MPDZ. Interacts with ARRB2. Interacts with MPP3; this interaction stabilizes the receptor at the plasma membrane and prevents the desensitization of the HTR2C receptor-mediated calcium response. As to expression, detected in brain cortex, hypothalamus, brainstem and arcuate nucleus. Detected in the paraventricular nucleus of the hypothalamus.

The protein resides in the cell membrane. In terms of biological role, G-protein coupled receptor for 5-hydroxytryptamine (serotonin). Also functions as a receptor for various drugs and psychoactive substances, including ergot alkaloid derivatives, 1-2,5,-dimethoxy-4-iodophenyl-2-aminopropane (DOI) and lysergic acid diethylamide (LSD). Ligand binding causes a conformation change that triggers signaling via guanine nucleotide-binding proteins (G proteins) and modulates the activity of downstream effectors. HTR2C is coupled to G(q)/G(11) G alpha proteins and activates phospholipase C-beta, releasing diacylglycerol (DAG) and inositol 1,4,5-trisphosphate (IP3) second messengers that modulate the activity of phosphatidylinositol 3-kinase and promote the release of Ca(2+) ions from intracellular stores, respectively. Beta-arrestin family members inhibit signaling via G proteins and mediate activation of alternative signaling pathways. Regulates neuronal activity via the activation of short transient receptor potential calcium channels in the brain, and thereby modulates the activation of pro-opiomelanocortin neurons and the release of CRH that then regulates the release of corticosterone. Plays a role in the regulation of appetite and eating behavior, responses to anxiogenic stimuli and stress. Plays a role in insulin sensitivity and glucose homeostasis. The sequence is that of 5-hydroxytryptamine receptor 2C from Mus musculus (Mouse).